A 215-amino-acid chain; its full sequence is Rac-like GTP-binding protein ARAC10 (215 aa).

15–22 (GDGAVGKT) provides a ligand contact to GTP. Residues 37 to 45 (YIPTVFDNF) carry the Effector region motif. GTP is bound by residues 62–66 (DTAGQ) and 120–123 (TKLD). Residues cysteine 202 and cysteine 208 are each lipidated (S-palmitoyl cysteine).

The protein belongs to the small GTPase superfamily. Rho family. In terms of assembly, component of the active ARAC10-IRC5-KIN13A complex. Interacts with ICR5.

The protein resides in the membrane. Its subcellular location is the cytoplasm. It localises to the cytoskeleton. Its function is as follows. Involved in local disassembly of cortical microtubules when associated with ICR5 and KIN13A. The protein is Rac-like GTP-binding protein ARAC10 (ARAC10) of Arabidopsis thaliana (Mouse-ear cress).